The sequence spans 684 residues: ATP-dependent DNA helicase RecG (684 aa).

The interval Arg-51 to His-148 is wedge domain. Positions Asp-278–Ile-439 constitute a Helicase ATP-binding domain. Gly-291–Thr-298 serves as a coordination point for ATP. The short motif at Asp-392–His-395 is the DEAH box element.

Belongs to the helicase family. RecG subfamily. In terms of assembly, monomer.

The enzyme catalyses Couples ATP hydrolysis with the unwinding of duplex DNA by translocating in the 3'-5' direction.. It carries out the reaction ATP + H2O = ADP + phosphate + H(+). Plays a critical role in recombination and DNA repair. Helps process Holliday junction intermediates to mature products by catalyzing branch migration. Has replication fork regression activity, unwinds stalled or blocked replication forks to make a HJ that can be resolved. Has a DNA unwinding activity characteristic of a DNA helicase with 3'-5' polarity. This chain is ATP-dependent DNA helicase RecG, found in Acidithiobacillus ferridurans.